We begin with the raw amino-acid sequence, 215 residues long: Ras-related protein Rab-5A (215 aa).

Residues Ser-29, Ala-30, Gly-32, Lys-33, Ser-34, Ser-35, His-46, Glu-47, Thr-52, and Gly-78 each contribute to the GTP site. Ser-34 contributes to the Mg(2+) binding site. 2 short sequence motifs (switch) span residues 44–56 (QFHEFQESTIGAA) and 77–93 (AGQERYHSLAPMYYRGA). Thr-52 is a Mg(2+) binding site. Ser-84 is modified (phosphoserine). GTP-binding residues include Asn-133, Lys-134, Asp-136, Ala-164, and Lys-165. The interval 185-215 (EPQNPGINCTRGRGVDLTEPTQPTRSQCCSN) is disordered. The segment covering 203 to 215 (EPTQPTRSQCCSN) has biased composition (polar residues). Residues Cys-212 and Cys-213 are each lipidated (S-geranylgeranyl cysteine).

The protein belongs to the small GTPase superfamily. Rab family. As to quaternary structure, interacts with GDI1; this promotes dissociation from membranes; phosphorylation at Ser-84 disrupts this interaction. Interacts with GDI2; phosphorylation at Ser-84 disrupts the interaction. Interacts with SGSM1 and SGSM3. Interacts with PIK3CB. Interacts with RIN1 and GAPVD1, which regulate its pathway, probably by acting as a GEF. Interacts with RINL. Interacts with ALS2CL, SUN2, ZFYVE20 and RUFY1. Interacts with RABEP1; one RABEP1 homodimer binds two RAB5A chains, but at opposite sides of the dimer. Interacts with OCRL and INPP5F. May be a component of a complex composed of RAB5A, DYN2 and PIK3C3. Does not interact with the BLOC-3 complex (heterodimer of HPS1 and HPS4). Interacts with CLN5. Interacts with APPL2. Interacts with F8A1/F8A2/F8A3. Found in a complex with F8A1/F8A2/F8A3, HTT and RAB5A; mediates the recruitment of HTT by RAB5A onto early endosomes. Interacts with ATP9A. Interacts with PPP1R21; mediates the recruitment of FERRY complex by RAB5A onto early endosomes. Requires Mg(2+) as cofactor. In terms of processing, phosphorylation of Ser-84 in the switch II region by LRRK2 prevents the association of RAB regulatory proteins, including RAB GDP dissociation inhibitors GDI1 and GDI2.

The protein localises to the cell membrane. The protein resides in the early endosome membrane. It is found in the melanosome. Its subcellular location is the cytoplasmic vesicle. It localises to the cell projection. The protein localises to the ruffle. The protein resides in the membrane. It is found in the cytoplasm. Its subcellular location is the cytosol. It localises to the phagosome membrane. The protein localises to the endosome membrane. It catalyses the reaction GTP + H2O = GDP + phosphate + H(+). Its activity is regulated as follows. Regulated by guanine nucleotide exchange factors (GEFs) including RINL, which promote the exchange of bound GDP for free GTP. Regulated by GTPase activating proteins (GAPs) which increase the GTP hydrolysis activity. Inhibited by GDP dissociation inhibitors (GDIs). Its function is as follows. The small GTPases Rab are key regulators of intracellular membrane trafficking, from the formation of transport vesicles to their fusion with membranes. Rabs cycle between an inactive GDP-bound form and an active GTP-bound form that is able to recruit to membranes different sets of downstream effectors directly responsible for vesicle formation, movement, tethering and fusion. RAB5A is required for the fusion of plasma membranes and early endosomes. Contributes to the regulation of filopodia extension. Required for the exosomal release of SDCBP, CD63, PDCD6IP and syndecan. Regulates maturation of apoptotic cell-containing phagosomes, probably downstream of DYN2 and PIK3C3. This is Ras-related protein Rab-5A (RAB5A) from Sus scrofa (Pig).